We begin with the raw amino-acid sequence, 768 residues long: Probable beta-glucosidase M (768 aa).

The signal sequence occupies residues 1-19; sequence MHAIAGLTGFLAGVSLSYA. N-linked (GlcNAc...) asparagine glycosylation is found at Asn-25, Asn-72, and Asn-259. The active site involves Asp-287. Asn-315, Asn-322, Asn-394, Asn-434, Asn-472, Asn-543, and Asn-651 each carry an N-linked (GlcNAc...) asparagine glycan.

The protein belongs to the glycosyl hydrolase 3 family.

The protein resides in the secreted. It carries out the reaction Hydrolysis of terminal, non-reducing beta-D-glucosyl residues with release of beta-D-glucose.. The protein operates within glycan metabolism; cellulose degradation. Its function is as follows. Beta-glucosidases are one of a number of cellulolytic enzymes involved in the degradation of cellulosic biomass. Catalyzes the last step releasing glucose from the inhibitory cellobiose. In Aspergillus flavus (strain ATCC 200026 / FGSC A1120 / IAM 13836 / NRRL 3357 / JCM 12722 / SRRC 167), this protein is Probable beta-glucosidase M (bglM).